A 94-amino-acid chain; its full sequence is Surfactant-associated protein 3 (94 aa).

In terms of tissue distribution, found in lung alveolar cells type I and II, as well as alveolar macrophages (at protein level). Detected also in testis and kidney. Expressed by different tissues of the ocular system like cornea, conjuctiva, lacrimal gland, eyelid and efferent tear ducts (at protein level). From these tissues is secreted into the tear film (at protein level).

The protein localises to the cytoplasm. The protein resides in the secreted. In terms of biological role, putative surfactant protein. May be involved in wound healing and in the reduction of the surface tension at the ocular surface. This Homo sapiens (Human) protein is Surfactant-associated protein 3 (SFTA3).